The following is a 365-amino-acid chain: Outer capsid protein sigma-3 (365 aa).

A CCHC-type zinc finger spans residues 51–73 (CMHCLGVVGSLQRKLKHLPHHRC).

Belongs to the orthoreovirus sigma-3 protein family. As to quaternary structure, heterohexamer of three sigma-3 and three Mu-1 proteins. The RNA-binding form is probably a homodimer. In terms of processing, cleaved during virus the endosomal proteolytic disassembly of the outer capsid.

It is found in the virion. Functionally, stimulates translation by blocking the activation of the dsRNA-dependent protein kinase EIF2AK2/PKR, thereby inhibiting the host interferon response. Sigma3 prevents the activation of EIF2AK2 by competing with the kinase for dsRNA-binding. The viral outer shell polypeptides, of which sigma-3 is one, impose structural constraints that prevent elongation of nascent transcripts by the RNA-dependent RNA polymerase lambda-3. The polypeptide is Outer capsid protein sigma-3 (S4) (Mammalia (T1L)).